We begin with the raw amino-acid sequence, 535 residues long: CTP synthase (535 aa).

The tract at residues 1-266 (MKTKFIFITG…DERVVEKLNI (266 aa)) is amidoligase domain. A CTP-binding site is contributed by serine 14. Serine 14 contributes to the UTP binding site. ATP contacts are provided by residues 15 to 20 (SIGKGL) and aspartate 72. Residues aspartate 72 and glutamate 140 each coordinate Mg(2+). Residues 147-149 (DIE), 187-192 (KTKPTQ), and lysine 223 contribute to the CTP site. UTP is bound by residues 187–192 (KTKPTQ) and lysine 223. Residues 292–534 (RIAIVGKYVN…VRAALIQRDA (243 aa)) enclose the Glutamine amidotransferase type-1 domain. Glycine 354 serves as a coordination point for L-glutamine. Cysteine 381 serves as the catalytic Nucleophile; for glutamine hydrolysis. L-glutamine is bound by residues 382 to 385 (LGMQ), glutamate 405, and arginine 462. Active-site residues include histidine 507 and glutamate 509.

Belongs to the CTP synthase family. Homotetramer.

It carries out the reaction UTP + L-glutamine + ATP + H2O = CTP + L-glutamate + ADP + phosphate + 2 H(+). The enzyme catalyses L-glutamine + H2O = L-glutamate + NH4(+). It catalyses the reaction UTP + NH4(+) + ATP = CTP + ADP + phosphate + 2 H(+). Its pathway is pyrimidine metabolism; CTP biosynthesis via de novo pathway; CTP from UDP: step 2/2. Allosterically activated by GTP, when glutamine is the substrate; GTP has no effect on the reaction when ammonia is the substrate. The allosteric effector GTP functions by stabilizing the protein conformation that binds the tetrahedral intermediate(s) formed during glutamine hydrolysis. Inhibited by the product CTP, via allosteric rather than competitive inhibition. Its function is as follows. Catalyzes the ATP-dependent amination of UTP to CTP with either L-glutamine or ammonia as the source of nitrogen. Regulates intracellular CTP levels through interactions with the four ribonucleotide triphosphates. The chain is CTP synthase from Pelobacter propionicus (strain DSM 2379 / NBRC 103807 / OttBd1).